A 309-amino-acid chain; its full sequence is NAD-dependent protein deacylase sirtuin-5, mitochondrial (309 aa).

A mitochondrion-targeting transit peptide spans 1–35; it reads MILLPFHTRRLVSHVYCGLKPASKKKGIALEMARP. Positions 36–306 constitute a Deacetylase sirtuin-type domain; sequence SSNLADFREA…PPAIARHETE (271 aa). 57–76 is an NAD(+) binding site; it reads GAGVSAESGVPTFRGAGGYW. Tyr-101 and Arg-104 together coordinate substrate. NAD(+) is bound at residue 139–142; that stretch reads QNID. The active-site Proton acceptor is the His-157. The Zn(2+) site is built by Cys-165, Cys-168, Cys-206, and Cys-211. NAD(+) contacts are provided by residues 248–250, 274–276, and Cys-292; these read GTS and NME.

This sequence belongs to the sirtuin family. Class III subfamily. Zn(2+) serves as cofactor.

It localises to the mitochondrion. It is found in the cytoplasm. The protein resides in the cytosol. The protein localises to the nucleus. It catalyses the reaction N(6)-malonyl-L-lysyl-[protein] + NAD(+) + H2O = 2''-O-malonyl-ADP-D-ribose + nicotinamide + L-lysyl-[protein]. The catalysed reaction is N(6)-succinyl-L-lysyl-[protein] + NAD(+) + H2O = 2''-O-succinyl-ADP-D-ribose + nicotinamide + L-lysyl-[protein]. The enzyme catalyses N(6)-glutaryl-L-lysyl-[protein] + NAD(+) + H2O = 2''-O-glutaryl-ADP-D-ribose + nicotinamide + L-lysyl-[protein]. In terms of biological role, NAD-dependent lysine demalonylase, desuccinylase and deglutarylase that specifically removes malonyl, succinyl and glutaryl groups on target proteins. Has weak NAD-dependent protein deacetylase activity; however this activity may not be physiologically relevant in vivo. The sequence is that of NAD-dependent protein deacylase sirtuin-5, mitochondrial (sirt5) from Xenopus tropicalis (Western clawed frog).